Consider the following 954-residue polypeptide: Kinesin-like protein KIN-7A (954 aa).

Residues 1 to 29 (MGVSRPPSTPASKIERTPMSTPTPGGSTR) are disordered. Residues 17-28 (TPMSTPTPGGST) are compositionally biased toward low complexity. In terms of domain architecture, Kinesin motor spans 34–354 (KIFVTVRVRP…LFFATCAKEV (321 aa)). Residue 119–126 (GQTSSGKT) coordinates ATP. 2 coiled-coil regions span residues 363 to 436 (VVSD…GDNQ) and 480 to 588 (LKHE…LVMS). Disordered stretches follow at residues 624–689 (PNLI…SSVN) and 741–762 (GKTN…DGPD). Residues 630 to 639 (PCSPLSSSRP) are compositionally biased toward low complexity. Basic and acidic residues-rich tracts occupy residues 640 to 660 (LEPE…EGSE) and 666 to 681 (KSED…ETPR).

Belongs to the TRAFAC class myosin-kinesin ATPase superfamily. Kinesin family. KIN-7 subfamily. As to expression, ubiquitous with a preferential expression in the shoot apical meristem (SAM).

Its function is as follows. May be essential to promote the progression of cytokinesis during node-internode differentiation. This is Kinesin-like protein KIN-7A from Oryza sativa subsp. japonica (Rice).